Consider the following 251-residue polypeptide: Triosephosphate isomerase (251 aa).

9 to 11 (NWK) serves as a coordination point for substrate. Residue histidine 95 is the Electrophile of the active site. The Proton acceptor role is filled by glutamate 167. Substrate contacts are provided by residues glycine 173, serine 213, and 234 to 235 (GG).

This sequence belongs to the triosephosphate isomerase family. Homodimer.

Its subcellular location is the cytoplasm. It carries out the reaction D-glyceraldehyde 3-phosphate = dihydroxyacetone phosphate. The protein operates within carbohydrate biosynthesis; gluconeogenesis. It functions in the pathway carbohydrate degradation; glycolysis; D-glyceraldehyde 3-phosphate from glycerone phosphate: step 1/1. Functionally, involved in the gluconeogenesis. Catalyzes stereospecifically the conversion of dihydroxyacetone phosphate (DHAP) to D-glyceraldehyde-3-phosphate (G3P). This is Triosephosphate isomerase from Carboxydothermus hydrogenoformans (strain ATCC BAA-161 / DSM 6008 / Z-2901).